A 578-amino-acid polypeptide reads, in one-letter code: Threonylcarbamoyladenosine tRNA methylthiotransferase (578 aa).

The MTTase N-terminal domain maps to 63 to 171 (QKIWIRTWGC…VVEVVEETIK (109 aa)). The [4Fe-4S] cluster site is built by C72 and C108. S121 carries the post-translational modification Phosphoserine. Residues C137, C213, C217, and C220 each coordinate [4Fe-4S] cluster. The Radical SAM core domain occupies 199 to 430 (RKNPLIEIIS…RVFHSYNPYD (232 aa)). The TRAM domain occupies 430–492 (DHKIGERQQV…KHFLKGQPVS (63 aa)). T498 carries the phosphothreonine modification. Residues 553-570 (CALKVATGLALLALLLHF) form a helical membrane-spanning segment.

This sequence belongs to the methylthiotransferase family. CDKAL1 subfamily. It depends on [4Fe-4S] cluster as a cofactor. As to expression, expressed in pancreas, liver and skeletal muscle, especially in white muscle fibers.

Its subcellular location is the endoplasmic reticulum membrane. It carries out the reaction N(6)-L-threonylcarbamoyladenosine(37) in tRNA + (sulfur carrier)-SH + AH2 + 2 S-adenosyl-L-methionine = 2-methylsulfanyl-N(6)-L-threonylcarbamoyladenosine(37) in tRNA + (sulfur carrier)-H + 5'-deoxyadenosine + L-methionine + A + S-adenosyl-L-homocysteine + 2 H(+). Its function is as follows. Catalyzes the methylthiolation of N6-threonylcarbamoyladenosine (t(6)A), leading to the formation of 2-methylthio-N6-threonylcarbamoyladenosine (ms(2)t(6)A) at position 37 in tRNAs that read codons beginning with adenine. The sequence is that of Threonylcarbamoyladenosine tRNA methylthiotransferase (Cdkal1) from Mus musculus (Mouse).